A 1096-amino-acid polypeptide reads, in one-letter code: MNSKYGDNIIDFLRYLEKFVKSLTKDNKIEEFKTFDIKSLLYPRNKDYFGNLSKFLLAVISARIGSNFINEDDIFEISELLKEFLGQELEHLPYLSYEELYVEIVEQVGEINGTVSEIIEAITVTIDFLDTFEKVSQTIDRSNEKQKLLAYLSAPVNQLDNSVSGVFNENDYTDIQRFFTELTNENNQSPDSNISILINDFQSLLNILESQQASSSSSKMIINDSPRTQQRNGTTEQQKKQQQQQYLQKNKEPFYSKDKIMQVSGPSYVFTPSDCNVSIQVGIPPDTLKRDQSICHFIVPHFLISKDVSLSEVEFPIFYNKFVQKGKTKVVIICTVEQKQRIETILCESIFGPAPEHIYTDEEITIPDYKIDLLTERLAIDPRANDEKLDSYVIFKTFDTFGVVDIDLPSASDPTKLINLRIRNTKGLISFHEDYHVVQKQLHLKLQEQQQDQQDKSSSSTTDKQMINTSGNRIILKNNTVSVIDSTIESQYVPVLPFGNDHEQVKKFKAPILGVTFLGVSHGLDFTHCSHTTGFIIWINGSGVVVDPPVGNTTYLQTNGIYGKTVEHIILTHCHADHDSGILQKIIERNKVTLYTTKTINESYMRKLKALTGLPEQSLKNYYTWVPVTIGNKIKILGAEFEFDYSFHVIPTIRFKLEIYNKKISYSADTFYDLQKFKQLKDQGVLSKKRIERLKSFVFDADMIIHESGVAPIHTPMANLLELPSEIRKKIRVVHCSSSVDTKGEIIRPKEGLENTEIIKVDRKYKGVAECIQIQTALNHCSVFSKLSPAEVQRVFFLCKKIWVKRNDVIIKKGSPSDMFYIILSGKVLVYENEYEPIKSTTSVGTVVTDTTTITTTVKTDAIKIPTIKLCAGETLGESALQLDKNIDASATVIAETDVCLLVWKTMDLRTEFHSNLNTFISKVHMDLSHINSCRDAIIRAFQHNITQHINKEEVDSIANGSKDVSFAHHQVIFNEGDTSDSMYIIKQGRVRIHSKKNKNIIRYLNVGDFFGETAYRRSNEDSNFLPTRSFTATAIDPTILLKLDIESIVNPRIQNIIEQKAKKNAEDNIRYHAYSPKIRTPRTPRKVYPIEGLSI.

Positions 216-248 are disordered; sequence SSSKMIINDSPRTQQRNGTTEQQKKQQQQQYLQ. Residues 225-236 are compositionally biased toward polar residues; it reads SPRTQQRNGTTE. 3 residues coordinate a divalent metal cation: His573, His575, and Asp577. A nucleoside 3',5'-cyclic phosphate is bound by residues 783 to 930 and 946 to 1070; these read VFSK…DLSH and ITQH…EDNI.

It belongs to the metallo-beta-lactamase superfamily. cNMP phosphodiesterase family. The cofactor is Mn(2+). Requires Mg(2+) as cofactor. Zn(2+) is required as a cofactor.

The protein localises to the cytoplasm. It is found in the cytosol. It catalyses the reaction 3',5'-cyclic AMP + H2O = AMP + H(+). The catalysed reaction is 3',5'-cyclic GMP + H2O = GMP + H(+). Dual specificity cAMP and cGMP phosphodiesterase with marked preference for cyclic AMP, which is activated by cAMP and cGMP. Likely functions as a cAMP-stimulated cAMP-phosphodiesterase which may play a role in regulating the cAMP relay response. In Dictyostelium discoideum (Social amoeba), this protein is cAMP/cGMP-dependent 3',5'-cAMP/cGMP phosphodiesterase B (pdeE).